The chain runs to 515 residues: Low affinity ammonium transporter (515 aa).

Residues methionine 1 to asparagine 78 lie on the Extracellular side of the membrane. The helical transmembrane segment at alanine 79–isoleucine 99 threads the bilayer. At alanine 100–lysine 111 the chain is on the cytoplasmic side. The chain crosses the membrane as a helical span at residues phenylalanine 112–tyrosine 132. Residues serine 133–cysteine 140 are Extracellular-facing. The chain crosses the membrane as a helical span at residues cysteine 141 to glycine 161. Topologically, residues arginine 162 to asparagine 171 are cytoplasmic. Residues methionine 172–serine 192 form a helical membrane-spanning segment. Residues serine 193–proline 202 are Extracellular-facing. A helical transmembrane segment spans residues tryptophan 203–isoleucine 223. At proline 224–arginine 241 the chain is on the cytoplasmic side. Residues isoleucine 242–asparagine 262 traverse the membrane as a helical segment. The Extracellular portion of the chain corresponds to glutamine 263–glutamine 270. A helical membrane pass occupies residues threonine 271–isoleucine 291. Residues glutamate 292–alanine 310 lie on the Cytoplasmic side of the membrane. Residues phenylalanine 311–tryptophan 331 form a helical membrane-spanning segment. Residues glutamine 332–serine 346 are Extracellular-facing. Residues alanine 347–leucine 367 traverse the membrane as a helical segment. Residues serine 368–threonine 374 are Cytoplasmic-facing. Residues valine 375 to valine 395 form a helical membrane-spanning segment. The Extracellular segment spans residues histidine 396–threonine 403. Residues phenylalanine 404–methionine 424 form a helical membrane-spanning segment. Over leucine 425 to glycine 435 the chain is Cytoplasmic. A helical transmembrane segment spans residues leucine 436–alanine 456. Residues glycine 457–tyrosine 479 lie on the Extracellular side of the membrane. The chain crosses the membrane as a helical span at residues methionine 480–phenylalanine 500. The Cytoplasmic segment spans residues methionine 501–glutamate 515.

It belongs to the major facilitator superfamily.

It is found in the cell membrane. In terms of biological role, low affinity ammonium transporter of the plasma membrane. May be involved in drug resistance through pumping them out of the cell. The sequence is that of Low affinity ammonium transporter from Saccharomyces cerevisiae (strain ATCC 204508 / S288c) (Baker's yeast).